The chain runs to 314 residues: 4-hydroxy-3-methylbut-2-enyl diphosphate reductase (314 aa).

Cys-12 is a binding site for [4Fe-4S] cluster. (2E)-4-hydroxy-3-methylbut-2-enyl diphosphate-binding residues include His-41 and His-74. Dimethylallyl diphosphate is bound by residues His-41 and His-74. Positions 41 and 74 each coordinate isopentenyl diphosphate. Residue Cys-96 participates in [4Fe-4S] cluster binding. Position 124 (His-124) interacts with (2E)-4-hydroxy-3-methylbut-2-enyl diphosphate. His-124 serves as a coordination point for dimethylallyl diphosphate. Residue His-124 participates in isopentenyl diphosphate binding. Glu-126 serves as the catalytic Proton donor. Thr-168 provides a ligand contact to (2E)-4-hydroxy-3-methylbut-2-enyl diphosphate. Cys-198 provides a ligand contact to [4Fe-4S] cluster. 4 residues coordinate (2E)-4-hydroxy-3-methylbut-2-enyl diphosphate: Ser-226, Ser-227, Asn-228, and Ser-270. Dimethylallyl diphosphate is bound by residues Ser-226, Ser-227, Asn-228, and Ser-270. Isopentenyl diphosphate is bound by residues Ser-226, Ser-227, Asn-228, and Ser-270.

The protein belongs to the IspH family. [4Fe-4S] cluster serves as cofactor.

The enzyme catalyses isopentenyl diphosphate + 2 oxidized [2Fe-2S]-[ferredoxin] + H2O = (2E)-4-hydroxy-3-methylbut-2-enyl diphosphate + 2 reduced [2Fe-2S]-[ferredoxin] + 2 H(+). It carries out the reaction dimethylallyl diphosphate + 2 oxidized [2Fe-2S]-[ferredoxin] + H2O = (2E)-4-hydroxy-3-methylbut-2-enyl diphosphate + 2 reduced [2Fe-2S]-[ferredoxin] + 2 H(+). The protein operates within isoprenoid biosynthesis; dimethylallyl diphosphate biosynthesis; dimethylallyl diphosphate from (2E)-4-hydroxy-3-methylbutenyl diphosphate: step 1/1. It functions in the pathway isoprenoid biosynthesis; isopentenyl diphosphate biosynthesis via DXP pathway; isopentenyl diphosphate from 1-deoxy-D-xylulose 5-phosphate: step 6/6. In terms of biological role, catalyzes the conversion of 1-hydroxy-2-methyl-2-(E)-butenyl 4-diphosphate (HMBPP) into a mixture of isopentenyl diphosphate (IPP) and dimethylallyl diphosphate (DMAPP). Acts in the terminal step of the DOXP/MEP pathway for isoprenoid precursor biosynthesis. In Pseudomonas aeruginosa (strain LESB58), this protein is 4-hydroxy-3-methylbut-2-enyl diphosphate reductase.